Consider the following 304-residue polypeptide: Plasmodesmata-located protein 3 (304 aa).

A signal peptide spans 1–26 (MGFYSLKQLLLLYIIIMALFSDLKLA). The Extracellular segment spans residues 27-272 (KSSSPEYTNL…SSSSGTTGKT (246 aa)). Gnk2-homologous domains are found at residues 34–138 (TNLI…ISGF) and 143–242 (GMEL…FYPN). Disulfide bonds link Cys-41–Cys-116, Cys-92–Cys-101, Cys-104–Cys-129, Cys-151–Cys-220, Cys-196–Cys-205, and Cys-208–Cys-233. Residues 273-293 (VAIIVGGTAGVGFLVICLLFV) traverse the membrane as a helical segment. The segment at 273 to 293 (VAIIVGGTAGVGFLVICLLFV) is necessary and sufficient for plasmodesmal targeting. At 294–304 (KNLMKKKYDDY) the chain is on the cytoplasmic side.

Belongs to the cysteine-rich repeat secretory protein family. Plasmodesmata-located proteins (PDLD) subfamily. (Microbial infection) Interacts with Grapevine fanleaf virus (GFLV) 2B-MP. Highly expressed in inflorescence pedacel and shoot apex. Expressed in the outermost L1 layer of the shoot apical meristem and in the epidermis of bulging floral primordia. Within the L1, expression was restricted to the peripheral zone (at protein level).

Its subcellular location is the cell membrane. The protein resides in the cell junction. It is found in the plasmodesma. Modulates cell-to-cell trafficking. This Arabidopsis thaliana (Mouse-ear cress) protein is Plasmodesmata-located protein 3.